Reading from the N-terminus, the 156-residue chain is Small ribosomal subunit protein uS7 (156 aa).

Belongs to the universal ribosomal protein uS7 family. As to quaternary structure, part of the 30S ribosomal subunit. Contacts proteins S9 and S11.

Functionally, one of the primary rRNA binding proteins, it binds directly to 16S rRNA where it nucleates assembly of the head domain of the 30S subunit. Is located at the subunit interface close to the decoding center, probably blocks exit of the E-site tRNA. The polypeptide is Small ribosomal subunit protein uS7 (Aeromonas hydrophila subsp. hydrophila (strain ATCC 7966 / DSM 30187 / BCRC 13018 / CCUG 14551 / JCM 1027 / KCTC 2358 / NCIMB 9240 / NCTC 8049)).